The following is a 351-amino-acid chain: MQPFVYTTAPARIVFGTGSSVGVAEEIRRLGLSRALVLSTPHQKGDAEALAARLGPLAAGVFSDAAMHTPVEVTKRAVEAYRAAGADCVVSLGGGSTTGLGKAIALRTDAPQIVIPTTYAGSEVTPILGQTENGVKTTLRGPEILPEVVIYDAELTLGLPVGISMTSGLNAMAHAAEALYARDRNPIASMMAVEGLRAMIEALPGVRMEPQDTKARETALYGAWLCGTVLGAVGMSLHHKLCHTLGGSLDLPHAETHAVLLPYTIAYVEQAVPDQLAPLAALVGGRAGTGLYDFAARLGAPASLAALGVGGEDLDAMAELATANPYWCPRPVEKTAIRALLQRAFEGARPE.

This sequence belongs to the iron-containing alcohol dehydrogenase family. In terms of assembly, homodimer.

The enzyme catalyses 3-oxoadipate + NAD(+) = maleylacetate + NADH + H(+). It functions in the pathway aromatic compound metabolism. Functionally, involved in the gamma-resorcylate (2,6-dihydroxybenzoate) catabolism. Catalyzes the reduction of maleylacetate to 3-oxoadipate. The protein is Maleylacetate reductase of Rhizobium sp. (strain MTP-10005).